We begin with the raw amino-acid sequence, 1268 residues long: Protein transport protein Sec24B (1268 aa).

Low complexity-rich tracts occupy residues 1 to 14 and 21 to 48; these read MSAP…AASA and GGAA…GPAQ. 4 disordered regions span residues 1 to 71, 216 to 263, 303 to 345, and 362 to 451; these read MSAP…SGHY, APTV…LTWS, QNVQ…SVTQ, and NNQA…VVPQ. Ser-2 bears the N-acetylserine mark. Ser-55 carries the phosphoserine modification. A compositionally biased stretch (polar residues) spans 225–234; sequence NSFSGQNTAI. Low complexity-rich tracts occupy residues 245–255, 311–332, and 365–375; these read SQQHHQQQSLS, SPVV…TPPT, and ASSAPTPLSST. Phosphothreonine is present on Thr-329. A compositionally biased stretch (acidic residues) spans 376-389; it reads SDDEEEEEEDEEAG. Positions 426–450 are enriched in pro residues; sequence APDPAPEPDPASAPAPASAPAPVVP. 4 residues coordinate Zn(2+): Cys-605, Cys-608, Cys-626, and Cys-629. Residues 605–629 form a zinc finger-like region; it reads CRSCRTYINPFVSFIDQRRWKCNLC. The Gelsolin-like repeat unit spans residues 1141 to 1213; the sequence is PQPPLQKLSA…TLSSERARSF (73 aa). Ser-1224 bears the Phosphoserine mark.

It belongs to the SEC23/SEC24 family. SEC24 subfamily. As to quaternary structure, COPII is composed of at least five proteins: the Sec23/24 complex, the Sec13/31 complex and SAR1. Interacts with STING1; promoting STING1 translocation to COPII vesicles in a STEEP1-dependent manner. Interacts with RNF139. Interacts with TMED2 and TMED10. Interacts with CNIH4.

The protein localises to the cytoplasmic vesicle. The protein resides in the COPII-coated vesicle membrane. It localises to the endoplasmic reticulum membrane. Its subcellular location is the cytoplasm. It is found in the cytosol. In terms of biological role, component of the coat protein complex II (COPII) which promotes the formation of transport vesicles from the endoplasmic reticulum (ER). The coat has two main functions, the physical deformation of the endoplasmic reticulum membrane into vesicles and the selection of cargo molecules for their transport to the Golgi complex. Plays a central role in cargo selection within the COPII complex and together with SEC24A may have a different specificity compared to SEC24C and SEC24D. May package preferentially cargos with cytoplasmic DxE or LxxLE motifs and may also recognize conformational epitopes. This is Protein transport protein Sec24B from Homo sapiens (Human).